The primary structure comprises 730 residues: Kinesin-like protein KIF2C (730 aa).

The segment at 1 to 256 is globular; sequence MERLVATRLV…MDCHRISMAD (256 aa). Positions 79-98 are disordered; that stretch reads NMPPQRNVSSQNHKRKTISK. Residues 211–242 form a negative regulator of microtubule-binding region; it reads EQRAQNYERRMKRAQDYDTSVPNWEFGKMIKE. The region spanning 262-592 is the Kinesin motor domain; sequence RICVCVRKRP…LRYADRVKEL (331 aa). ATP contacts are provided by residues arginine 268 and 352–359; that span reads GQTGSGKT. Residues 599-730 are a coiled coil; the sequence is TNDDNLQMED…QISKKKRSNK (132 aa).

Belongs to the TRAFAC class myosin-kinesin ATPase superfamily. Kinesin family. MCAK/KIF2 subfamily.

Its subcellular location is the cytoplasm. The protein resides in the cytoskeleton. It localises to the nucleus. The protein localises to the chromosome. It is found in the centromere. Its subcellular location is the kinetochore. Functionally, promotes ATP-dependent removal of tubulin dimers from microtubules. Regulates the turnover of microtubules at the kinetochore and functions in chromosome segregation during mitosis. May play a role in chromosome congression and may be required for the lateral to end-on conversion of the chromosome-microtubule attachment. This chain is Kinesin-like protein KIF2C (kif2c), found in Xenopus laevis (African clawed frog).